A 456-amino-acid chain; its full sequence is MFRKFVIMLVLSLLVAAGISQASSASRVCIIGAGYSGLATARYLQDYGLNYTIFEATPNIGGTWRYDPRVGTDEDGIPIYSSNYKNLRVNSPVDLMTYHGYEFQEGTRSFISGNCFYKYMKSFVRHFGLMENIQVRSLVTWVQRTEDKWNLTYMKTDTRKNYTEECDFVVVASGEFSTPKIPHIKGQEEYKGKTMHSHDYKEAESFRGQRVLVIGAGPSGLDVVMQLSNITSKLVHSQHILKSWHIFNQPDFPGNFISKPNVKHFTANGAVFEDDTVEEFDMVIYCTGFYYNHPFLSTLSSGITATENYVMPLYQQVVNINQPTMTFVGICKPFFAKLLDQQAHYSAKLAAGHFKLPSQDKMLRHWLEHVQMLREAQFKITDVNSVGPNVDEYFKALHKEAGVPLLPPVYASVFVFSGKTLLEDLQNYREYDYRIISDTQFKKKYNPREEVCPYDD.

The signal sequence occupies residues M1–A22. G32–G37 contributes to the FAD binding site. Residue G215 to G220 coordinates NADP(+).

Belongs to the FMO family. As to quaternary structure, homotetramer. FAD is required as a cofactor. In terms of tissue distribution, hemolymph.

It is found in the secreted. The catalysed reaction is senecionine + NADPH + O2 = senecionine N-oxide + NADP(+) + H2O. In terms of biological role, NADPH-dependent monooxygenase that detoxifies senecionine and similar plant alkaloids that are ingested by the larvae. Is active towards a narrow range of related substrates with highest activity towards senecionine, followed by seneciphylline, retrorsine, monocrotaline, senecivernine, axillarine and axillaridine. This chain is Senecionine N-oxygenase (sno1), found in Tyria jacobaeae (Cinnabar moth).